A 176-amino-acid polypeptide reads, in one-letter code: ATP-dependent protease subunit HslV (176 aa).

Thr-5 is a catalytic residue. Residues Ser-161, Cys-164, and Thr-167 each contribute to the Na(+) site.

This sequence belongs to the peptidase T1B family. HslV subfamily. A double ring-shaped homohexamer of HslV is capped on each side by a ring-shaped HslU homohexamer. The assembly of the HslU/HslV complex is dependent on binding of ATP.

The protein resides in the cytoplasm. It carries out the reaction ATP-dependent cleavage of peptide bonds with broad specificity.. With respect to regulation, allosterically activated by HslU binding. Functionally, protease subunit of a proteasome-like degradation complex believed to be a general protein degrading machinery. The protein is ATP-dependent protease subunit HslV of Desulfitobacterium hafniense (strain DSM 10664 / DCB-2).